A 1450-amino-acid chain; its full sequence is Inactive serine/threonine-protein kinase TEX14 (1450 aa).

ANK repeat units follow at residues Leu27 to Thr54, Gln55 to His84, and Asp88 to Leu117. Phosphoserine occurs at positions 175 and 186. One can recognise a Protein kinase domain in the interval Ile199 to Ile512. Residues Ile205–Phe213 and Lys267 each bind ATP. Ser431 is subject to Phosphoserine; by PLK1. 2 positions are modified to phosphoserine: Ser561 and Ser662. The disordered stretch occupies residues Ser700 to Ser720. A GPPX3Y motif is present at residues Gly791–Tyr797. Disordered regions lie at residues Val852–Val906, Pro947–Glu977, Asp992–Lys1012, and Gln1035–Ile1062. Polar residues-rich tracts occupy residues Lys875 to Gln886 and Lys894 to Val906. The D-box motif lies at Arg889–Asn897. Residues Asp992–Asn1011 are compositionally biased toward basic and acidic residues. A compositionally biased stretch (polar residues) spans Gln1038–Pro1061. Phosphoserine is present on residues Ser1060 and Ser1221. Disordered stretches follow at residues Thr1261–Leu1282 and Lys1300–Thr1418. Composition is skewed to polar residues over residues Lys1300–Glu1311 and Thr1332–Arg1344. 2 positions are modified to phosphoserine: Ser1357 and Ser1358. 2 stretches are compositionally biased toward basic and acidic residues: residues Ser1383–Gln1397 and Ser1404–Asp1413. Ser1412 and Ser1449 each carry phosphoserine.

The protein belongs to the protein kinase superfamily. Interacts with KIF23 and RBM44. Interacts with CEP55; inhibiting interaction between CEP55 and PDCD6IP/ALIX and TSG101. In terms of processing, phosphorylated on Thr residues by CDK1 during early phases of mitosis, promoting the interaction with PLK1 and recruitment to kinetochores. Phosphorylated on Ser-431 by PLK1 during late prometaphase promotes the rapid depletion from kinetochores and its subsequent degradation by the APC/C complex. Detected in testis and spermatogonia. Not detectable in the other tissues tested.

The protein resides in the cytoplasm. It localises to the midbody. Its subcellular location is the chromosome. The protein localises to the centromere. It is found in the kinetochore. In terms of biological role, required both for the formation of intercellular bridges during meiosis and for kinetochore-microtubule attachment during mitosis. Intercellular bridges are evolutionarily conserved structures that connect differentiating germ cells and are required for spermatogenesis and male fertility. Acts by promoting the conversion of midbodies into intercellular bridges via its interaction with CEP55: interaction with CEP55 inhibits the interaction between CEP55 and PDCD6IP/ALIX and TSG101, blocking cell abscission and leading to transform midbodies into intercellular bridges. Also plays a role during mitosis: recruited to kinetochores by PLK1 during early mitosis and regulates the maturation of the outer kinetochores and microtubule attachment. Has no protein kinase activity in vitro. The protein is Inactive serine/threonine-protein kinase TEX14 (Tex14) of Mus musculus (Mouse).